A 475-amino-acid chain; its full sequence is UDP-glycosyltransferase 76E1 (475 aa).

Catalysis depends on His19, which acts as the Proton acceptor. His19 lines the an anthocyanidin pocket. The Charge relay role is filled by Asp109. UDP-alpha-D-glucose is bound by residues Thr131, Ala329, Gln331, His346, Trp349, Asn350, Ser351, and Glu354. Ala369 serves as a coordination point for an anthocyanidin. UDP-alpha-D-glucose-binding residues include Asp370 and Gln371.

The protein belongs to the UDP-glycosyltransferase family. As to expression, expressed in flowers and fruits.

Its subcellular location is the cytoplasm. The protein resides in the nucleus. It catalyses the reaction 2-cis-(+)-abscisate + UDP-alpha-D-glucose = beta-D-glucopyranosyl cis-(+)-abscisate + UDP. Functionally, glucosyltransferase acting on abscisic acid (ABA) but not on auxin (IAA). In Solanum lycopersicum (Tomato), this protein is UDP-glycosyltransferase 76E1.